Here is a 106-residue protein sequence, read N- to C-terminus: Biogenesis of lysosome-related organelles complex 1 subunit 6 (106 aa).

The segment at 78–106 (KKTSQLELSDTNIEDGSTTSTPTTTNKSQ) is disordered. Positions 82 to 93 (QLELSDTNIEDG) are enriched in polar residues. A compositionally biased stretch (low complexity) spans 94–106 (STTSTPTTTNKSQ).

Belongs to the BLOC1S6 family. Homodimer (isoform 1). Component of the biogenesis of lysosome-related organelles complex-1 (BLOC-1) composed at least of blos-1, blos-2, blos-4, dsbn-1, glo-2, mutd-1 and snpn-1. Isoform 1 interacts with blos-1 and blos-4.

The protein resides in the cytoplasm. Its subcellular location is the endosome. Component of the biogenesis of lysosome-related organelles complex-1 (BLOC-1) involved in gut granule biogenesis. This Caenorhabditis elegans protein is Biogenesis of lysosome-related organelles complex 1 subunit 6 (glo-2).